Here is a 188-residue protein sequence, read N- to C-terminus: dCTP deaminase (188 aa).

109-114 (KSTYAR) lines the dCTP pocket. The active-site Proton donor/acceptor is glutamate 135. 3 residues coordinate dCTP: glutamine 154, tyrosine 168, and glutamine 178.

The protein belongs to the dCTP deaminase family. As to quaternary structure, homotrimer.

It carries out the reaction dCTP + H2O + H(+) = dUTP + NH4(+). It participates in pyrimidine metabolism; dUMP biosynthesis; dUMP from dCTP (dUTP route): step 1/2. Catalyzes the deamination of dCTP to dUTP. The protein is dCTP deaminase of Helicobacter pylori (strain J99 / ATCC 700824) (Campylobacter pylori J99).